The primary structure comprises 157 residues: Transcriptional repressor NrdR (157 aa).

The segment at 3-34 is a zinc-finger region; the sequence is CPFCGHAESQVKDSRPSEDGAAIRRRRMCPEC. The ATP-cone domain maps to 49–139; that stretch reads LIIVKRSGRR…VYRDFKETSD (91 aa).

It belongs to the NrdR family. Zn(2+) serves as cofactor.

Its function is as follows. Negatively regulates transcription of bacterial ribonucleotide reductase nrd genes and operons by binding to NrdR-boxes. This Caulobacter vibrioides (strain ATCC 19089 / CIP 103742 / CB 15) (Caulobacter crescentus) protein is Transcriptional repressor NrdR.